We begin with the raw amino-acid sequence, 91 residues long: Signal recognition particle 19 kDa protein (91 aa).

It belongs to the SRP19 family. Part of the signal recognition particle protein translocation system, which is composed of SRP and FtsY. Archaeal SRP consists of a 7S RNA molecule of 300 nucleotides and two protein subunits: SRP54 and SRP19.

The protein resides in the cytoplasm. Functionally, involved in targeting and insertion of nascent membrane proteins into the cytoplasmic membrane. Binds directly to 7S RNA and mediates binding of the 54 kDa subunit of the SRP. This Methanoregula boonei (strain DSM 21154 / JCM 14090 / 6A8) protein is Signal recognition particle 19 kDa protein.